We begin with the raw amino-acid sequence, 522 residues long: MSISSDEVNFLVYRYLQESGFSHSAFTFGIESHISQSNINGALVPPAALISIIQKGLQYVEAEVSINEDGTLFDGRPIESLSLIDAVMPDVVQTRQQAYRDKLAQQQQAAAAAAAAAAAAAATSANNQQPPAKNGESTANGEENGGHALANNHTDMMEVDGDVEIPPSKAVVLRGHESEVFICAWNPVSDLLASGSGDSTARIWNLSENSTSGSTQLVLRHCIREGGQDVPSNKDVTSLDWNSEGTLLATGSYDGFARIWTKDGNLASTLGQHKGPIFALKWNKKGNFILSAGVDKTTIIWDAHTGEAKQQFPFHSAPALDVDWQSNNTFASCSTDMCIHVCKLGQDRPIKTFQGHTNEVNAIKWDPTGNLLASCSDDMTLKIWSMKHDTCVHDLQAHNKEIYTIKWSPTGPGTNNPNANLMLASASFDSTVRLWDVDRGICIHTLTKHQEPVYSVAFSPDGRYLASGSFDKCVHIWNTQTGALVHSYRGTGGIFEVCWNAAGDKVGASASDGSVCVLDLRK.

Residues 4–36 (SSDEVNFLVYRYLQESGFSHSAFTFGIESHISQ) form the LisH domain. Positions 41 to 86 (GALVPPAALISIIQKGLQYVEAEVSINEDGTLFDGRPIESLSLIDA) constitute an F-box-like domain. A disordered region spans residues 122-150 (ATSANNQQPPAKNGESTANGEENGGHALA). Residues 123 to 141 (TSANNQQPPAKNGESTANG) show a composition bias toward polar residues. WD repeat units follow at residues 175 to 214 (GHESEVFICAWNPVSDLLASGSGDSTARIWNLSENSTSGS), 231 to 270 (PSNKDVTSLDWNSEGTLLATGSYDGFARIWTKDGNLASTL), 272 to 311 (QHKGPIFALKWNKKGNFILSAGVDKTTIIWDAHTGEAKQQ), 314 to 352 (FHSAPALDVDWQSNNTFASCSTDMCIHVCKLGQDRPIKT), 355 to 394 (GHTNEVNAIKWDPTGNLLASCSDDMTLKIWSMKHDTCVHD), 397 to 445 (AHNK…CIHT), 448 to 487 (KHQEPVYSVAFSPDGRYLASGSFDKCVHIWNTQTGALVHS), and 489 to 522 (RGTGGIFEVCWNAAGDKVGASASDGSVCVLDLRK).

It belongs to the WD repeat EBI family. Interacts with heterodimers of rxra and thrb, and this interaction is abrogated by thyroid hormone binding to thrb. Interacts with ncor1.

It is found in the nucleus. In terms of biological role, F-box-like protein which acts as an integral component of the N-CoR transcriptional corepressor complex. Probably regulates transcription activation mediated by nuclear receptors. May mediate the recruitment of the 19S proteasome complex, leading to the subsequent proteasomal degradation of the N-CoR complex, thereby allowing cofactor exchange and transcription activation. This Xenopus laevis (African clawed frog) protein is F-box-like/WD repeat-containing protein TBL1XR1-B (tbl1xr1-b).